A 288-amino-acid chain; its full sequence is Polyamine aminopropyltransferase (288 aa).

The 230-residue stretch at 9–238 (ETLHDQFGQY…GIMTFAWATD (230 aa)) folds into the PABS domain. An S-methyl-5'-thioadenosine-binding site is contributed by Gln-33. Residues His-64 and Asp-88 each coordinate spermidine. Residues Glu-108 and 140–141 (DG) each bind S-methyl-5'-thioadenosine. Asp-158 acts as the Proton acceptor in catalysis. 158 to 161 (DCTD) provides a ligand contact to spermidine. An S-methyl-5'-thioadenosine-binding site is contributed by Pro-165.

Belongs to the spermidine/spermine synthase family. Homodimer or homotetramer.

Its subcellular location is the cytoplasm. It catalyses the reaction S-adenosyl 3-(methylsulfanyl)propylamine + putrescine = S-methyl-5'-thioadenosine + spermidine + H(+). It participates in amine and polyamine biosynthesis; spermidine biosynthesis; spermidine from putrescine: step 1/1. Its function is as follows. Catalyzes the irreversible transfer of a propylamine group from the amino donor S-adenosylmethioninamine (decarboxy-AdoMet) to putrescine (1,4-diaminobutane) to yield spermidine. The polypeptide is Polyamine aminopropyltransferase (Escherichia coli O81 (strain ED1a)).